The sequence spans 142 residues: Large ribosomal subunit protein bL17 (142 aa).

This sequence belongs to the bacterial ribosomal protein bL17 family. Part of the 50S ribosomal subunit. Contacts protein L32.

The polypeptide is Large ribosomal subunit protein bL17 (Wolbachia pipientis subsp. Culex pipiens (strain wPip)).